Consider the following 1325-residue polypeptide: uncharacterized protein (1325 aa).

The N-terminal stretch at 1–18 (MNRIYRVIWNCTLQVFQA) is a signal peptide. A lipid anchor (N-palmitoyl cysteine) is attached at cysteine 19. The S-diacylglycerol cysteine moiety is linked to residue cysteine 19.

This sequence to E.coli YfaL.

The protein resides in the cell membrane. This is an uncharacterized protein from Escherichia coli (strain K12).